A 472-amino-acid polypeptide reads, in one-letter code: Aspartyl/glutamyl-tRNA(Asn/Gln) amidotransferase subunit B (472 aa).

The protein belongs to the GatB/GatE family. GatB subfamily. In terms of assembly, heterotrimer of A, B and C subunits.

It carries out the reaction L-glutamyl-tRNA(Gln) + L-glutamine + ATP + H2O = L-glutaminyl-tRNA(Gln) + L-glutamate + ADP + phosphate + H(+). It catalyses the reaction L-aspartyl-tRNA(Asn) + L-glutamine + ATP + H2O = L-asparaginyl-tRNA(Asn) + L-glutamate + ADP + phosphate + 2 H(+). Functionally, allows the formation of correctly charged Asn-tRNA(Asn) or Gln-tRNA(Gln) through the transamidation of misacylated Asp-tRNA(Asn) or Glu-tRNA(Gln) in organisms which lack either or both of asparaginyl-tRNA or glutaminyl-tRNA synthetases. The reaction takes place in the presence of glutamine and ATP through an activated phospho-Asp-tRNA(Asn) or phospho-Glu-tRNA(Gln). In Campylobacter jejuni subsp. jejuni serotype O:23/36 (strain 81-176), this protein is Aspartyl/glutamyl-tRNA(Asn/Gln) amidotransferase subunit B.